Here is a 386-residue protein sequence, read N- to C-terminus: MSALPPTALALAEQLIARASVTPEDAGCQALVVQRLQAQGFDCHTLESGPDDFRVTNLWAVRRGRSADGFTLVFAGHTDVVPTGPLERWTSDPFVPSHRDGRLYGRGAADMKTSIACMVVAIEEFVAAYPRHAGSIALLLTSDEEGPALDGTTQVVRWLQARGERLDGCIVGEPTSVNAVGDMIKNGRRGSLSGRLVVQGVQGHIAYPHLAKNPIHAVAPALAELVQVVWDGGNEHFPPTSWQVSNLHAGTGASNVIPGEAVVDFNFRFSTESTPETLQQRLAAVLDRHGLQYTIDWTLGGRPFLTRPGSLTEALGSAILQVTGRTTELSTTGGTSDGRFIATVCPQVVECGPVNASIHQIDEHVAVAEIEPLKEIYRSTLERLVA.

Histidine 77 provides a ligand contact to Zn(2+). The active site involves aspartate 79. Aspartate 110 provides a ligand contact to Zn(2+). The active-site Proton acceptor is the glutamate 144. Zn(2+)-binding residues include glutamate 145, glutamate 173, and histidine 359.

It belongs to the peptidase M20A family. DapE subfamily. As to quaternary structure, homodimer. Requires Zn(2+) as cofactor. It depends on Co(2+) as a cofactor.

It carries out the reaction N-succinyl-(2S,6S)-2,6-diaminopimelate + H2O = (2S,6S)-2,6-diaminopimelate + succinate. It participates in amino-acid biosynthesis; L-lysine biosynthesis via DAP pathway; LL-2,6-diaminopimelate from (S)-tetrahydrodipicolinate (succinylase route): step 3/3. Catalyzes the hydrolysis of N-succinyl-L,L-diaminopimelic acid (SDAP), forming succinate and LL-2,6-diaminopimelate (DAP), an intermediate involved in the bacterial biosynthesis of lysine and meso-diaminopimelic acid, an essential component of bacterial cell walls. This Methylibium petroleiphilum (strain ATCC BAA-1232 / LMG 22953 / PM1) protein is Succinyl-diaminopimelate desuccinylase.